We begin with the raw amino-acid sequence, 220 residues long: Charged multivesicular body protein 2a (220 aa).

Residues 12 to 53 are a coiled coil; it reads EEMLRQNQRALNRAMRDLDRERQRLEQQEKKIIADIKKMAKQ. Positions 184 to 220 are disordered; the sequence is ATGGSLSVAAGKKAEPQPTLADADADLEERLNNLRRD. Residues 208–218 carry the MIT-interacting motif motif; sequence ADLEERLNNLR. Residues 211-220 show a composition bias toward basic and acidic residues; sequence EERLNNLRRD.

It belongs to the SNF7 family. Probable core component of the endosomal sorting required for transport complex III (ESCRT-III). ESCRT-III components are thought to multimerize to form a flat lattice on the perimeter membrane of the endosome.

It is found in the late endosome membrane. Its subcellular location is the cytoplasm. Its function is as follows. Probable core component of the endosomal sorting required for transport complex III (ESCRT-III) which is involved in multivesicular bodies (MVBs) formation and sorting of endosomal cargo proteins into MVBs. MVBs contain intraluminal vesicles (ILVs) that are generated by invagination and scission from the limiting membrane of the endosome and mostly are delivered to lysosomes enabling degradation of membrane proteins, such as stimulated growth factor receptors, lysosomal enzymes and lipids. This is Charged multivesicular body protein 2a (chmp2a) from Danio rerio (Zebrafish).